The following is a 260-amino-acid chain: Endonuclease NucS (260 aa).

The protein belongs to the NucS endonuclease family.

The protein localises to the cytoplasm. Cleaves both 3' and 5' ssDNA extremities of branched DNA structures. This Methanopyrus kandleri (strain AV19 / DSM 6324 / JCM 9639 / NBRC 100938) protein is Endonuclease NucS.